A 185-amino-acid polypeptide reads, in one-letter code: Potassium-transporting ATPase KdpC subunit 2 (185 aa).

The helical transmembrane segment at 8–28 (LGLVLIMFVLCGFIFPLTVTA) threads the bilayer.

The protein belongs to the KdpC family. As to quaternary structure, the system is composed of three essential subunits: KdpA, KdpB and KdpC.

It is found in the cell membrane. The protein localises to the membrane raft. Functionally, part of the high-affinity ATP-driven potassium transport (or Kdp) system, which catalyzes the hydrolysis of ATP coupled with the electrogenic transport of potassium into the cytoplasm. This subunit acts as a catalytic chaperone that increases the ATP-binding affinity of the ATP-hydrolyzing subunit KdpB by the formation of a transient KdpB/KdpC/ATP ternary complex. The protein is Potassium-transporting ATPase KdpC subunit 2 of Staphylococcus aureus (strain Mu50 / ATCC 700699).